The chain runs to 487 residues: Iron-sulfur cluster assembly SufBD family protein ycf24 (487 aa).

This sequence belongs to the iron-sulfur cluster assembly SufBD family.

It localises to the plastid. Its subcellular location is the chloroplast. This Pyropia yezoensis (Susabi-nori) protein is Iron-sulfur cluster assembly SufBD family protein ycf24 (ycf24).